Reading from the N-terminus, the 396-residue chain is UDP-galactose translocator (396 aa).

A run of 10 helical transmembrane segments spans residues 3 to 23 (AVGAGGSTAAPGPGAVSAGAL), 37 to 57 (YISLAVLVVQNASLILSIRYA), 65 to 85 (FFATTAVVMAEVLKGLTCLLL), 97 to 117 (LVLFLHEAVLVQYVDTLKLAV), 140 to 160 (TFQVTYQLKILTTALFSVLML), 169 to 189 (WASLLLLFTGVAIVQAQQAGG), 200 to 220 (GAGLAAVVASCLSSGFAGVYF), 238 to 258 (LGLFGTALGLVGLWWAEGTAV), 269 to 289 (PAVWGVVLNQAFGGLLVAVVV), and 315 to 335 (LFGFHVDPLFALGAGLVIGAV). The segment at 358–379 (PCVHQQPPGQPPPPQLSSHRGD) is disordered. The ER retention motif signature appears at 392-396 (KVKGS).

It belongs to the nucleotide-sugar transporter family. SLC35A subfamily. In terms of assembly, interacts with SLC35A3; the interaction is reduced in the presence of SLC35A4. Found in a complex with SLC35A3 and SLC35A4. Interacts with B4GALT4.

The protein localises to the endoplasmic reticulum membrane. It localises to the golgi apparatus membrane. The catalysed reaction is UMP(out) + UDP-alpha-D-galactose(in) = UMP(in) + UDP-alpha-D-galactose(out). The enzyme catalyses UDP-N-acetyl-alpha-D-galactosamine(in) + UMP(out) = UDP-N-acetyl-alpha-D-galactosamine(out) + UMP(in). It carries out the reaction UMP(out) + UDP-alpha-D-glucose(in) = UMP(in) + UDP-alpha-D-glucose(out). It catalyses the reaction UMP(out) + UDP-N-acetyl-alpha-D-glucosamine(in) = UMP(in) + UDP-N-acetyl-alpha-D-glucosamine(out). The catalysed reaction is UDP-alpha-D-galactose(in) + AMP(out) = UDP-alpha-D-galactose(out) + AMP(in). The enzyme catalyses UDP-alpha-D-galactose(in) + CMP(out) = UDP-alpha-D-galactose(out) + CMP(in). It carries out the reaction UDP-N-acetyl-alpha-D-galactosamine(out) + UDP-alpha-D-galactose(in) = UDP-N-acetyl-alpha-D-galactosamine(in) + UDP-alpha-D-galactose(out). It catalyses the reaction UDP-N-acetyl-alpha-D-glucosamine(out) + UDP-alpha-D-galactose(in) = UDP-N-acetyl-alpha-D-glucosamine(in) + UDP-alpha-D-galactose(out). The catalysed reaction is UDP-alpha-D-galactose(in) + UDP-alpha-D-glucose(out) = UDP-alpha-D-galactose(out) + UDP-alpha-D-glucose(in). The enzyme catalyses UMP(out) + CMP(in) = UMP(in) + CMP(out). It carries out the reaction UMP(out) + AMP(in) = UMP(in) + AMP(out). Functionally, transports uridine diphosphate galactose (UDP-galactose) from the cytosol into the Golgi apparatus, functioning as an antiporter that exchanges UDP-galactose for UMP. It is also able to exchange UDP-galactose for AMP and CMP, and to transport UDP-N-acetylgalactosamine (UDP-GalNAc) and other nucleotide sugars. As a provider of UDP-galactose to galactosyltransferases present in the Golgi apparatus, it is necessary for globotriaosylceramide/globoside (Gb3Cer) synthesis from lactosylceramide. The chain is UDP-galactose translocator from Homo sapiens (Human).